Consider the following 706-residue polypeptide: Probable E3 ubiquitin ligase complex SCF subunit sconB (706 aa).

A compositionally biased stretch (basic and acidic residues) spans 1–12 (MQSDDRSVREGS). Disordered regions lie at residues 1-43 (MQSD…LLQQ) and 56-76 (TAEEIDTETDSNHRRPHSFGA). Over residues 34 to 43 (QQQQQQLLQQ) the composition is skewed to low complexity. In terms of domain architecture, F-box spans 203-249 (IDFLTALPPEISFKILCYLDTTSLCKAAQVSSRWRALADDDVVWHRM). WD repeat units lie at residues 377–414 (GHTNGVMCLQFEDNILATGSYDATIKIWDTETGEELRT), 417–456 (GHQSGIRCLQFDDTKLISGSMDRSLKVWNWRTGECISTYT), 458–494 (HRGGVIGLHFDATILASASVDKTVKIWNFEDKSTFLL), 496–537 (GHTD…RTFH), 589–632 (ATET…CLRT), 635–672 (GHLEGVWALGADTLRIVSGAEDRMVKIWDPRTGKCERT), and 675–706 (GHSGPVTCIGLGDSRFATGSEDCEVRMYSFRN).

The protein belongs to the WD repeat MET30/SCONB/SCON-2 family. As to quaternary structure, component of the SCF(sconB) E3 ubiquitin ligase complex.

Its pathway is protein modification; protein ubiquitination. Its function is as follows. Component of the SCF(sconB) E3 ubiquitin ligase complex involved in the regulation of sulfur metabolite repression, probably by mediating the inactivation or degradation of the metR transcription factor. This is Probable E3 ubiquitin ligase complex SCF subunit sconB (sconB) from Aspergillus flavus (strain ATCC 200026 / FGSC A1120 / IAM 13836 / NRRL 3357 / JCM 12722 / SRRC 167).